A 294-amino-acid polypeptide reads, in one-letter code: Aspartate carbamoyltransferase catalytic subunit (294 aa).

2 residues coordinate carbamoyl phosphate: Arg49 and Thr50. Residue Lys77 coordinates L-aspartate. Carbamoyl phosphate contacts are provided by Arg99, His127, and Gln130. Arg161 and Arg211 together coordinate L-aspartate. Gly250 and Pro251 together coordinate carbamoyl phosphate.

This sequence belongs to the aspartate/ornithine carbamoyltransferase superfamily. ATCase family. In terms of assembly, heterododecamer (2C3:3R2) of six catalytic PyrB chains organized as two trimers (C3), and six regulatory PyrI chains organized as three dimers (R2).

It carries out the reaction carbamoyl phosphate + L-aspartate = N-carbamoyl-L-aspartate + phosphate + H(+). Its pathway is pyrimidine metabolism; UMP biosynthesis via de novo pathway; (S)-dihydroorotate from bicarbonate: step 2/3. Catalyzes the condensation of carbamoyl phosphate and aspartate to form carbamoyl aspartate and inorganic phosphate, the committed step in the de novo pyrimidine nucleotide biosynthesis pathway. The sequence is that of Aspartate carbamoyltransferase catalytic subunit from Sulfurovum sp. (strain NBC37-1).